The following is a 339-amino-acid chain: MTVRVGINGFGRIGRNFYRALLAQQEQGTADIEVVAVNDITDNSTLAHLLKFDSILGRLPYDVSLEGEDTIVVGPAKIKALEVREGPAALPWGDLGVDVVVESTGLFTNAAKAKGHLDAGAKKVIISAPATDEDITVVLGVNDDKYDGSQNIISNASCTTNCLAPLTKVLDDEFGIVRGLMTTIHAYTQDQNLQDGPHKDLRRARAAALNIVPTSTGAAKAIGLVMPNLKGKLDGYALRVPIPTGSVTDLTAELKKPASVEDINAAFKAAAEGRLKGILKYYDAPIVSSDIVTDPHSSIFDSGLTKVIDNQAKVVSWYDNEWGYSNRLVDLVALVGKSL.

NAD(+) contacts are provided by residues 12-13 (RI), D39, R84, and S127. D-glyceraldehyde 3-phosphate-binding positions include 157–159 (SCT), T188, R203, 216–217 (TG), and R239. Catalysis depends on C158, which acts as the Nucleophile. Residue N320 coordinates NAD(+).

This sequence belongs to the glyceraldehyde-3-phosphate dehydrogenase family. Homotetramer.

The protein resides in the cytoplasm. The enzyme catalyses D-glyceraldehyde 3-phosphate + phosphate + NAD(+) = (2R)-3-phospho-glyceroyl phosphate + NADH + H(+). The protein operates within carbohydrate degradation; glycolysis; pyruvate from D-glyceraldehyde 3-phosphate: step 1/5. Functionally, catalyzes the oxidative phosphorylation of glyceraldehyde 3-phosphate (G3P) to 1,3-bisphosphoglycerate (BPG) using the cofactor NAD. The first reaction step involves the formation of a hemiacetal intermediate between G3P and a cysteine residue, and this hemiacetal intermediate is then oxidized to a thioester, with concomitant reduction of NAD to NADH. The reduced NADH is then exchanged with the second NAD, and the thioester is attacked by a nucleophilic inorganic phosphate to produce BPG. The chain is Glyceraldehyde-3-phosphate dehydrogenase (gapA) from Mycobacterium avium.